A 276-amino-acid polypeptide reads, in one-letter code: Glutamate 5-kinase (276 aa).

Lys-14 lines the ATP pocket. The substrate site is built by Ser-54, Asp-141, and Asn-157. ATP contacts are provided by residues 177–178 and 219–225; these read SD and TGGMLTK.

It belongs to the glutamate 5-kinase family.

It localises to the cytoplasm. It carries out the reaction L-glutamate + ATP = L-glutamyl 5-phosphate + ADP. The protein operates within amino-acid biosynthesis; L-proline biosynthesis; L-glutamate 5-semialdehyde from L-glutamate: step 1/2. Functionally, catalyzes the transfer of a phosphate group to glutamate to form L-glutamate 5-phosphate. This chain is Glutamate 5-kinase, found in Listeria welshimeri serovar 6b (strain ATCC 35897 / DSM 20650 / CCUG 15529 / CIP 8149 / NCTC 11857 / SLCC 5334 / V8).